A 190-amino-acid chain; its full sequence is Orotate phosphoribosyltransferase (190 aa).

Position 114 to 122 (114 to 122 (EDVVTTGGS)) interacts with 5-phospho-alpha-D-ribose 1-diphosphate. The orotate site is built by Thr118 and Arg146.

Belongs to the purine/pyrimidine phosphoribosyltransferase family. PyrE subfamily. In terms of assembly, homodimer. Requires Mg(2+) as cofactor.

The enzyme catalyses orotidine 5'-phosphate + diphosphate = orotate + 5-phospho-alpha-D-ribose 1-diphosphate. Its pathway is pyrimidine metabolism; UMP biosynthesis via de novo pathway; UMP from orotate: step 1/2. In terms of biological role, catalyzes the transfer of a ribosyl phosphate group from 5-phosphoribose 1-diphosphate to orotate, leading to the formation of orotidine monophosphate (OMP). The polypeptide is Orotate phosphoribosyltransferase (Caldanaerobacter subterraneus subsp. tengcongensis (strain DSM 15242 / JCM 11007 / NBRC 100824 / MB4) (Thermoanaerobacter tengcongensis)).